The sequence spans 485 residues: Probable aspartic-type endopeptidase opsB (485 aa).

The first 20 residues, 1 to 20 (MRHIFSLLSIVCLMVKHGAC), serve as a signal peptide directing secretion. The Peptidase A1 domain occupies 69-397 (YFCNVTLGTP…DIANNEISIA (329 aa)). N-linked (GlcNAc...) asparagine glycosylation is present at Asn-72. Asp-87 is an active-site residue. N-linked (GlcNAc...) asparagine glycosylation is found at Asn-99, Asn-107, Asn-111, and Asn-132. The active site involves Asp-285. N-linked (GlcNAc...) asparagine glycosylation is found at Asn-328, Asn-337, and Asn-402. The GPI-anchor amidated serine moiety is linked to residue Ser-461. Residues 462–485 (AGVARADKQYLAIALIAVWFVLGL) constitute a propeptide, removed in mature form.

It belongs to the peptidase A1 family.

The protein localises to the cell membrane. Functionally, probable GPI-anchored aspartic-type endopeptidase which contributes to virulence. The chain is Probable aspartic-type endopeptidase opsB (opsB) from Aspergillus fumigatus (strain ATCC MYA-4609 / CBS 101355 / FGSC A1100 / Af293) (Neosartorya fumigata).